The following is a 455-amino-acid chain: Bleomycin hydrolase (455 aa).

The residue at position 1 (Met-1) is an N-acetylmethionine. Active-site residues include Cys-73 and His-372. Lys-391 carries the N6-acetyllysine modification. Residue Asn-396 is part of the active site.

This sequence belongs to the peptidase C1 family. As to quaternary structure, homohexamer. Interacts with NUDT12 (via ANK repeats).

Its subcellular location is the cytoplasm. It localises to the cytoplasmic granule. It catalyses the reaction Inactivates bleomycin B2 (a cytotoxic glycometallopeptide) by hydrolysis of a carboxyamide bond of beta-aminoalanine, but also shows general aminopeptidase activity. The specificity varies somewhat with source, but amino acid arylamides of Met, Leu and Ala are preferred.. Its function is as follows. The normal physiological role of BLM hydrolase is unknown, but it catalyzes the inactivation of the antitumor drug BLM (a glycopeptide) by hydrolyzing the carboxamide bond of its B-aminoalaninamide moiety thus protecting normal and malignant cells from BLM toxicity. This is Bleomycin hydrolase (Blmh) from Mus musculus (Mouse).